The following is a 937-amino-acid chain: Aconitate hydratase A (937 aa).

3 residues coordinate [4Fe-4S] cluster: C439, C505, and C508. The tract at residues 898–921 (KKESKSTQSTTSKGCGSADTSSET) is disordered.

This sequence belongs to the aconitase/IPM isomerase family. As to quaternary structure, monomer. Requires [4Fe-4S] cluster as cofactor.

The catalysed reaction is citrate = D-threo-isocitrate. The enzyme catalyses (2S,3R)-3-hydroxybutane-1,2,3-tricarboxylate = 2-methyl-cis-aconitate + H2O. The protein operates within carbohydrate metabolism; tricarboxylic acid cycle; isocitrate from oxaloacetate: step 2/2. Its pathway is organic acid metabolism; propanoate degradation. In terms of biological role, involved in the catabolism of short chain fatty acids (SCFA) via the tricarboxylic acid (TCA)(acetyl degradation route) and probably the 2-methylcitrate cycle I (propionate degradation route). Catalyzes the reversible isomerization of citrate to isocitrate via cis-aconitate. Could catalyze the hydration of 2-methyl-cis-aconitate to yield (2R,3S)-2-methylisocitrate. The apo form of AcnA functions as a RNA-binding regulatory protein. The polypeptide is Aconitate hydratase A (acn) (Francisella tularensis subsp. holarctica (strain LVS)).